Reading from the N-terminus, the 60-residue chain is Large ribosomal subunit protein uL30 (60 aa).

The protein belongs to the universal ribosomal protein uL30 family. In terms of assembly, part of the 50S ribosomal subunit.

The sequence is that of Large ribosomal subunit protein uL30 from Cutibacterium acnes (strain DSM 16379 / KPA171202) (Propionibacterium acnes).